The following is a 335-amino-acid chain: Carboxylesterase 1 (335 aa).

The Involved in the stabilization of the negatively charged intermediate by the formation of the oxyanion hole motif lies at 90–92 (HGG). Paraoxon-binding positions include 92-93 (GG), serine 169, and alanine 170. The active site involves serine 169. Residues aspartate 276 and histidine 306 contribute to the active site.

The protein belongs to the 'GDXG' lipolytic enzyme family.

It catalyses the reaction a carboxylic ester + H2O = an alcohol + a carboxylate + H(+). Is inhibited by the organophosphates paraoxon and dimethylchlorophosphate (DMCP). Its function is as follows. Carboxylesterase acting on esters with varying acyl chain length. The sequence is that of Carboxylesterase 1 (CXE1) from Actinidia eriantha (Velvet vine).